Consider the following 481-residue polypeptide: Ribulose bisphosphate carboxylase large chain (481 aa).

The propeptide occupies 1 to 2; the sequence is MS. Pro3 carries the post-translational modification N-acetylproline. An N6,N6,N6-trimethyllysine modification is found at Lys14. Residues Asn123 and Thr173 each contribute to the substrate site. The Proton acceptor role is filled by Lys175. A substrate-binding site is contributed by Lys177. Lys201, Asp203, and Glu204 together coordinate Mg(2+). At Lys201 the chain carries N6-carboxylysine. The active-site Proton acceptor is the His294. Arg295, His327, and Ser379 together coordinate substrate.

Belongs to the RuBisCO large chain family. Type I subfamily. Heterohexadecamer of 8 large chains and 8 small chains; disulfide-linked. The disulfide link is formed within the large subunit homodimers. The cofactor is Mg(2+). In terms of processing, the disulfide bond which can form in the large chain dimeric partners within the hexadecamer appears to be associated with oxidative stress and protein turnover.

It is found in the plastid. It carries out the reaction 2 (2R)-3-phosphoglycerate + 2 H(+) = D-ribulose 1,5-bisphosphate + CO2 + H2O. It catalyses the reaction D-ribulose 1,5-bisphosphate + O2 = 2-phosphoglycolate + (2R)-3-phosphoglycerate + 2 H(+). In terms of biological role, ruBisCO catalyzes two reactions: the carboxylation of D-ribulose 1,5-bisphosphate, the primary event in carbon dioxide fixation, as well as the oxidative fragmentation of the pentose substrate in the photorespiration process. Both reactions occur simultaneously and in competition at the same active site. In Cuscuta gronovii (Common dodder), this protein is Ribulose bisphosphate carboxylase large chain.